We begin with the raw amino-acid sequence, 750 residues long: Cullin-5 (750 aa).

Residues R678–D739 form the Cullin neddylation domain. A Glycyl lysine isopeptide (Lys-Gly) (interchain with G-Cter in NEDD8) cross-link involves residue K691.

Belongs to the cullin family. In terms of processing, neddylated; which enhances the ubiquitination activity of SCF-like complex.

It functions in the pathway protein modification; protein ubiquitination. In terms of biological role, probable core component of cullin-based SCF-like E3 ubiquitin-protein ligase complexes which mediate the ubiquitination and subsequent proteasomal degradation of target proteins. The E3 ubiquitin-protein ligase activity of the complex is dependent on the neddylation of the cullin subunit. The protein is Cullin-5 (culE) of Dictyostelium discoideum (Social amoeba).